A 296-amino-acid chain; its full sequence is MFVTLIKPLARLHPRAWDFVQLVRLDRPIGIYLLLWPTLWSLWIAADGVPELKNLLIFVLGVILMRAAGCVINDFADRNFDGHVARTKARPLATGKISVREAWITFAVLVALSFGLVLLTNATTVWLSFGAVAVASLYPFMKRYTYYPQVVLGAAYSWGILMAFTAERGELPASAWLLFLANVLWTVAYDSYYAMTDREDDLKIGIKSTAILFGDADRLIIGSLQGLTLLLLVLAGNRFELGLCFYLGLAVAAACFVWEAWSTRDRDPQACFRAFLHNHWAGLAIFLGTVADYALR.

8 helical membrane passes run 29–49 (IGIYLLLWPTLWSLWIAADGV), 55–75 (LLIFVLGVILMRAAGCVINDF), 102–122 (AWITFAVLVALSFGLVLLTNA), 146–166 (YYPQVVLGAAYSWGILMAFTA), 169–189 (GELPASAWLLFLANVLWTVAY), 219–239 (LIIGSLQGLTLLLLVLAGNRF), 241–261 (LGLCFYLGLAVAAACFVWEAW), and 275–295 (FLHNHWAGLAIFLGTVADYAL).

This sequence belongs to the UbiA prenyltransferase family. Requires Mg(2+) as cofactor.

The protein resides in the cell inner membrane. It catalyses the reaction all-trans-octaprenyl diphosphate + 4-hydroxybenzoate = 4-hydroxy-3-(all-trans-octaprenyl)benzoate + diphosphate. The protein operates within cofactor biosynthesis; ubiquinone biosynthesis. Functionally, catalyzes the prenylation of para-hydroxybenzoate (PHB) with an all-trans polyprenyl group. Mediates the second step in the final reaction sequence of ubiquinone-8 (UQ-8) biosynthesis, which is the condensation of the polyisoprenoid side chain with PHB, generating the first membrane-bound Q intermediate 3-octaprenyl-4-hydroxybenzoate. This chain is 4-hydroxybenzoate octaprenyltransferase, found in Pseudomonas aeruginosa (strain LESB58).